Reading from the N-terminus, the 205-residue chain is uncharacterized protein (205 aa).

5 helical membrane-spanning segments follow: residues 5–25, 41–61, 68–88, 117–137, and 147–167; these read VWLA…SGTV, GAII…GIGI, SALA…WLGI, LINL…PQFI, and FLVL…GYTA.

It belongs to the Rht family.

It localises to the cell inner membrane. In terms of biological role, involved in positive regulation of motility and negative regulation of biofilm formation. This is an uncharacterized protein from Vibrio cholerae serotype O1 (strain ATCC 39315 / El Tor Inaba N16961).